A 322-amino-acid polypeptide reads, in one-letter code: MKHIPVLEDGPWKTVCVKELNGLKKLKRKGKEPVRRANGYKTFRLDLEAPELGATVSTTAATNGLRDRTQPFPIATPVPASVAPAVPPGGGTDTAREFRGIRAPEVSDARKRGFALGTVGPGLPTPPPPPASQSLAPGDPEAHSFREQALRPRILLCAPPARPTQSAPLAPPAAPQESPVRPAPPTRPGESSYSSISHVIYNNHPDSSASPRKRPGEATAASTEIKALQQTRRLLANARERTRVHTISAAFEALRKQVPCYSYGQKLSKLAILRIACNYILSLARLADLDYSADHSNLSFSECVQRCTRTLQAEGRAKKRKE.

Disordered stretches follow at residues 77-96 (PVPASVAPAVPPGGGTDTAR), 101-144 (IRAP…EAHS), and 159-221 (PPAR…ATAA). A compositionally biased stretch (basic and acidic residues) spans 101 to 111 (IRAPEVSDARK). Residues 231–244 (TRRLLANARERTRV) form a basic motif; degenerate region. In terms of domain architecture, bHLH spans 231–283 (TRRLLANARERTRVHTISAAFEALRKQVPCYSYGQKLSKLAILRIACNYILSL). Residues 245–283 (HTISAAFEALRKQVPCYSYGQKLSKLAILRIACNYILSL) are helix-loop-helix motif.

As to quaternary structure, efficient DNA binding requires dimerization with another bHLH protein. Interacts with NEUROG3 and NEUROD1. Interacts with ZFPM2; mediates indirect interaction with GATA4. Forms a heterodimer with TCF3; repress transcription of TCF3 and TCF3/NEUROG3 dimer-induced transactivation of E box-dependent promoters. As to expression, expressed by subsets of mature neurons. Expressed in kidney (podocytes). Expression is restricted to the atria, lung mesenchyme, and vascular smooth muscle.

It is found in the nucleus. It localises to the nucleus speckle. The protein resides in the cytoplasm. Transcription factor that binds a palindromic (canonical) core consensus DNA sequence 5'-CANNTG- 3' known as an E-box element, possibly as a heterodimer with other bHLH proteins. Regulates endothelial cell proliferation, migration and tube-like structures formation. Modulates endothelial cell differentiation through NOS3. May be implicated in specification and differentiation of neuronal cell lineages in the brain. May participate in kidney development and may be involved in podocyte differentiation. During early embryonic development is involved in tissue-specific differentiation processes that are dependent on class II bHLH factors and namely modulates the differentiation program initiated by the pro-endocrine factor NEUROG3. During myogenesis, may play a role during the transition of myoblasts from the proliferative phase to the differentiation phase. Positively regulates HAMP transcription in two ways, firstly by acting directly on the HAMP promoter via E-boxes binding and indirectly through increased phosphorylation of SMAD protein complex. Repress NEUROG3-dependent gene activation in a gene-specific manner through at least two mechanisms; requires only either the sequestering of a general partner such as TCF3 through heterodimerization, either also requires binding of the bHLH domain to DNA via a basic motif. This Mus musculus (Mouse) protein is Transcription factor Atoh8.